A 121-amino-acid polypeptide reads, in one-letter code: Flagellar hook-basal body complex protein FliE (121 aa).

This sequence belongs to the FliE family.

It localises to the bacterial flagellum basal body. This Saccharophagus degradans (strain 2-40 / ATCC 43961 / DSM 17024) protein is Flagellar hook-basal body complex protein FliE.